The primary structure comprises 166 residues: Protein YciF (166 aa).

As to quaternary structure, homodimer.

This chain is Protein YciF (yciF), found in Escherichia coli (strain K12).